The chain runs to 143 residues: Nucleoside diphosphate kinase (143 aa).

ATP-binding residues include K11, F59, R87, T93, R104, and N114. Residue H117 is the Pros-phosphohistidine intermediate of the active site.

The protein belongs to the NDK family. In terms of assembly, homotetramer. Mg(2+) serves as cofactor.

The protein resides in the cytoplasm. The catalysed reaction is a 2'-deoxyribonucleoside 5'-diphosphate + ATP = a 2'-deoxyribonucleoside 5'-triphosphate + ADP. It catalyses the reaction a ribonucleoside 5'-diphosphate + ATP = a ribonucleoside 5'-triphosphate + ADP. Functionally, major role in the synthesis of nucleoside triphosphates other than ATP. The ATP gamma phosphate is transferred to the NDP beta phosphate via a ping-pong mechanism, using a phosphorylated active-site intermediate. The polypeptide is Nucleoside diphosphate kinase (Citrobacter koseri (strain ATCC BAA-895 / CDC 4225-83 / SGSC4696)).